Consider the following 357-residue polypeptide: uncharacterized protein (357 aa).

A run of 3 helical transmembrane segments spans residues 21 to 41 (FIKI…LFSW), 86 to 106 (FFCL…CTLF), and 135 to 155 (GGFV…PVIF). 2 disordered regions span residues 184-229 (DKNK…AMSD) and 283-357 (KAGS…NKRN). A compositionally biased stretch (low complexity) spans 195 to 223 (TTNTTNFSGNGSSSSTTNATSSSSSQANN). Composition is skewed to basic and acidic residues over residues 305-314 (KIEEYDNQKQ) and 322-337 (KETN…EKET). Positions 305 to 337 (KIEEYDNQKQEEEENEEKETNKQQTQKDDEKET) form a coiled coil. Positions 346-357 (KKSKKGKKNKRN) are enriched in basic residues.

It localises to the membrane. This is an uncharacterized protein from Dictyostelium discoideum (Social amoeba).